Consider the following 81-residue polypeptide: Photosystem I iron-sulfur center (81 aa).

4Fe-4S ferredoxin-type domains lie at 2-31 and 39-68; these read SHAV…MVPW and IASA…VRVY. Positions 11, 14, 17, 21, 48, 51, 54, and 58 each coordinate [4Fe-4S] cluster.

As to quaternary structure, the eukaryotic PSI reaction center is composed of at least 11 subunits. It depends on [4Fe-4S] cluster as a cofactor.

The protein resides in the plastid. The protein localises to the chloroplast thylakoid membrane. The catalysed reaction is reduced [plastocyanin] + hnu + oxidized [2Fe-2S]-[ferredoxin] = oxidized [plastocyanin] + reduced [2Fe-2S]-[ferredoxin]. Its function is as follows. Apoprotein for the two 4Fe-4S centers FA and FB of photosystem I (PSI); essential for photochemical activity. FB is the terminal electron acceptor of PSI, donating electrons to ferredoxin. The C-terminus interacts with PsaA/B/D and helps assemble the protein into the PSI complex. Required for binding of PsaD and PsaE to PSI. PSI is a plastocyanin/cytochrome c6-ferredoxin oxidoreductase, converting photonic excitation into a charge separation, which transfers an electron from the donor P700 chlorophyll pair to the spectroscopically characterized acceptors A0, A1, FX, FA and FB in turn. The sequence is that of Photosystem I iron-sulfur center from Ostreococcus tauri.